Consider the following 319-residue polypeptide: Acetyl-coenzyme A carboxylase carboxyl transferase subunit alpha (319 aa).

The CoA carboxyltransferase C-terminal domain occupies 35-296; that stretch reads NIDEEVHRLR…KAQLLADLAD (262 aa).

Belongs to the AccA family. Acetyl-CoA carboxylase is a heterohexamer composed of biotin carboxyl carrier protein (AccB), biotin carboxylase (AccC) and two subunits each of ACCase subunit alpha (AccA) and ACCase subunit beta (AccD).

Its subcellular location is the cytoplasm. It catalyses the reaction N(6)-carboxybiotinyl-L-lysyl-[protein] + acetyl-CoA = N(6)-biotinyl-L-lysyl-[protein] + malonyl-CoA. The protein operates within lipid metabolism; malonyl-CoA biosynthesis; malonyl-CoA from acetyl-CoA: step 1/1. In terms of biological role, component of the acetyl coenzyme A carboxylase (ACC) complex. First, biotin carboxylase catalyzes the carboxylation of biotin on its carrier protein (BCCP) and then the CO(2) group is transferred by the carboxyltransferase to acetyl-CoA to form malonyl-CoA. The chain is Acetyl-coenzyme A carboxylase carboxyl transferase subunit alpha from Shigella boydii serotype 4 (strain Sb227).